Consider the following 226-residue polypeptide: Ribose-5-phosphate isomerase A (226 aa).

Substrate is bound by residues 26–29 (TGST), 82–85 (DGAD), and 95–98 (KGGG). The active-site Proton acceptor is the E104. Position 122 (K122) interacts with substrate.

The protein belongs to the ribose 5-phosphate isomerase family. In terms of assembly, homodimer.

It catalyses the reaction aldehydo-D-ribose 5-phosphate = D-ribulose 5-phosphate. It functions in the pathway carbohydrate degradation; pentose phosphate pathway; D-ribose 5-phosphate from D-ribulose 5-phosphate (non-oxidative stage): step 1/1. Functionally, catalyzes the reversible conversion of ribose-5-phosphate to ribulose 5-phosphate. The protein is Ribose-5-phosphate isomerase A of Streptococcus uberis (strain ATCC BAA-854 / 0140J).